A 760-amino-acid polypeptide reads, in one-letter code: Formate acetyltransferase 1 (760 aa).

Positions 3-625 constitute a PFL domain; the sequence is ELNEKLATAW…KTGNTPDGRR (623 aa). The residue at position 63 (Lys-63) is an N6-acetyllysine; alternate. Lys-63 is subject to N6-succinyllysine; alternate. Lys-107 is subject to N6-succinyllysine. Lys-117 is subject to N6-acetyllysine; alternate. Lys-117 bears the N6-succinyllysine; alternate mark. At Lys-124 the chain carries N6-succinyllysine. The residue at position 195 (Lys-195) is an N6-acetyllysine; alternate. Lys-195 carries the post-translational modification N6-succinyllysine; alternate. Cys-419 (S-acetylcysteine intermediate) is an active-site residue. Cys-420 (cysteine radical intermediate) is an active-site residue. Lys-454 bears the N6-acetyllysine; alternate mark. Lys-454 carries the N6-succinyllysine; alternate modification. An N6-succinyllysine modification is found at Lys-467. An N6-acetyllysine mark is found at Lys-541 and Lys-591. One can recognise a Glycine radical domain in the interval 632–760; that stretch reads PGANPMHGRD…VITRTFTQSM (129 aa). At Lys-654 the chain carries N6-succinyllysine. Gly-735 bears the Glycine radical mark.

It belongs to the glycyl radical enzyme (GRE) family. PFL subfamily. Homodimer. Interacts specifically with FocA.

It localises to the cytoplasm. The enzyme catalyses formate + acetyl-CoA = pyruvate + CoA. Its pathway is fermentation; pyruvate fermentation; formate from pyruvate: step 1/1. Functionally, catalyzes the conversion of pyruvate to formate and acetyl-CoA. In addition, may be involved in the control of the activity of the formate channel FocA, via direct interaction with FocA. This is Formate acetyltransferase 1 (pflB) from Escherichia coli (strain K12).